Consider the following 784-residue polypeptide: E3 UFM1-protein ligase 1 homolog (784 aa).

A compositionally biased stretch (basic and acidic residues) spans 398-414 (QEVDHGVMEEEKADKRE). The disordered stretch occupies residues 398–472 (QEVDHGVMEE…ASNKKGGKDP (75 aa)).

The protein belongs to the UFL1 family.

Functionally, E3 UFM1-protein ligase that mediates ufmylation of target proteins. This Anopheles gambiae (African malaria mosquito) protein is E3 UFM1-protein ligase 1 homolog.